A 96-amino-acid chain; its full sequence is Translation initiation factor 1A 1 (96 aa).

One can recognise an S1-like domain in the interval 8 to 82 (GSHDLRMPDD…EKGDITWRYE (75 aa)).

This sequence belongs to the eIF-1A family.

In terms of biological role, seems to be required for maximal rate of protein biosynthesis. Enhances ribosome dissociation into subunits and stabilizes the binding of the initiator Met-tRNA(I) to 40 S ribosomal subunits. The protein is Translation initiation factor 1A 1 of Haloquadratum walsbyi (strain DSM 16790 / HBSQ001).